The chain runs to 467 residues: MAP kinase-interacting serine/threonine-protein kinase 2 (467 aa).

Positions 83–367 constitute a Protein kinase domain; that stretch reads QLQQEILGEG…AAQVLQHPWV (285 aa). ATP is bound by residues 89–97 and K112; that span reads LGEGAYAKV. Catalysis depends on D204, which acts as the Proton acceptor. Residues C298, C310, and C313 each contribute to the Zn(2+) site. Residues 432–467 form a disordered region; sequence MQLSPPSESKLAKRRQQGSKGGISPPSLAPLLIVSD.

The protein belongs to the protein kinase superfamily. CAMK Ser/Thr protein kinase family. Mg(2+) is required as a cofactor. The cofactor is Zn(2+).

The enzyme catalyses L-seryl-[protein] + ATP = O-phospho-L-seryl-[protein] + ADP + H(+). The catalysed reaction is L-threonyl-[protein] + ATP = O-phospho-L-threonyl-[protein] + ADP + H(+). Its function is as follows. May play a role in the response to environmental stress and cytokines. Appears to regulate translation by phosphorylating EIF4E, thus increasing the affinity of this protein for the 7-methylguanosine-containing mRNA cap. This chain is MAP kinase-interacting serine/threonine-protein kinase 2 (mknk2), found in Xenopus laevis (African clawed frog).